The primary structure comprises 319 residues: Epoxyqueuosine reductase (319 aa).

Aspartate 128 acts as the Proton donor in catalysis. Residues 173 to 202 enclose the 4Fe-4S ferredoxin-type domain; that stretch reads EANDPHPNYCGTCTRCLSACPTAALVEPAV. [4Fe-4S] cluster-binding residues include cysteine 182, cysteine 185, cysteine 188, cysteine 192, cysteine 208, cysteine 236, cysteine 239, and cysteine 243.

Belongs to the QueG family. In terms of assembly, monomer. Cob(II)alamin is required as a cofactor. The cofactor is [4Fe-4S] cluster.

It localises to the cytoplasm. The enzyme catalyses epoxyqueuosine(34) in tRNA + AH2 = queuosine(34) in tRNA + A + H2O. The protein operates within tRNA modification; tRNA-queuosine biosynthesis. Catalyzes the conversion of epoxyqueuosine (oQ) to queuosine (Q), which is a hypermodified base found in the wobble positions of tRNA(Asp), tRNA(Asn), tRNA(His) and tRNA(Tyr). This chain is Epoxyqueuosine reductase, found in Gloeobacter violaceus (strain ATCC 29082 / PCC 7421).